We begin with the raw amino-acid sequence, 867 residues long: Bifunctional cis-abienol synthase, chloroplastic (867 aa).

The transit peptide at 1–49 (MALPVYSLKSHIPITTIASAKMNYTPNKGMITANGRSRRIRLSPNKIVA) directs the protein to the chloroplast. Lys270 provides a ligand contact to substrate. The short motif at 403-406 (DIDD) is the DXDD motif element. Lys490 contacts substrate. Mg(2+) is bound by residues Asp622, Asp626, Asn763, Asp764, Thr767, and Glu771. The DDXXD motif motif lies at 622-626 (DDLYD).

The protein belongs to the terpene synthase family. Tpsd subfamily. Requires Mg(2+) as cofactor.

The protein resides in the plastid. The protein localises to the chloroplast. The enzyme catalyses 8-hydroxycopalyl diphosphate = cis-abienol + diphosphate. It carries out the reaction (2E,6E,10E)-geranylgeranyl diphosphate + H2O = 8-hydroxycopalyl diphosphate. It participates in terpene metabolism; oleoresin biosynthesis. Its function is as follows. Involved in the biosynthesis of cis-abienol, a labdane diterpene that can be used as synthesis precursor of ambergris substitution fragance products. Bifunctional class I/II enzyme in which both the bicyclization and water capture occur in the class II active site, resulting in an intermediary labda-13-en-8-ol diphosphate, which undergoes cleavage of the diphosphate group and final deprotonation at the class I active site. No activity with copalyl diphosphate as substrate. In Abies balsamea (Balsam fir), this protein is Bifunctional cis-abienol synthase, chloroplastic (CAS).